The sequence spans 149 residues: MEEEFKHMVRIARKDIDGNKTMENALTSIKGVGKALSRAIIMSAGYDLNQRIGYLSDEEIERLEEAIKNPAKYNIPSWMINRRNDYETGEDKHLIESDLEMCLREDLNRMRKTRSYKGRRHELGLPVRGQRTKSTFRKGSSVGVRRKKR.

A disordered region spans residues 118-149; the sequence is GRRHELGLPVRGQRTKSTFRKGSSVGVRRKKR.

This sequence belongs to the universal ribosomal protein uS13 family. Part of the 30S ribosomal subunit. Forms a loose heterodimer with protein S19. Forms two bridges to the 50S subunit in the 70S ribosome.

In terms of biological role, located at the top of the head of the 30S subunit, it contacts several helices of the 16S rRNA. In the 70S ribosome it contacts the 23S rRNA (bridge B1a) and protein L5 of the 50S subunit (bridge B1b), connecting the 2 subunits; these bridges are implicated in subunit movement. The sequence is that of Small ribosomal subunit protein uS13 from Methanothermobacter thermautotrophicus (strain ATCC 29096 / DSM 1053 / JCM 10044 / NBRC 100330 / Delta H) (Methanobacterium thermoautotrophicum).